Here is a 240-residue protein sequence, read N- to C-terminus: 26.7 kDa heat shock protein, chloroplastic (240 aa).

A chloroplast-targeting transit peptide spans 1–43 (MAAPFALVSRVSPAARLPIRAAWRRARPTVGLPSSGRARQLAV). The tract at residues 59-84 (HVNQDGGNQQGNAVQRRPRRSSALDG) is disordered. Positions 126 to 240 (LATGEVRMPW…ERKVIDVQVQ (115 aa)) constitute a sHSP domain.

This sequence belongs to the small heat shock protein (HSP20) family. In terms of assembly, may form oligomeric structures. In terms of tissue distribution, expressed in roots, stems, leaves, spikelets and embryos.

The protein resides in the plastid. Its subcellular location is the chloroplast. The protein is 26.7 kDa heat shock protein, chloroplastic (HSP26.7) of Oryza sativa subsp. japonica (Rice).